Consider the following 388-residue polypeptide: DNA replication and repair protein RecF (388 aa).

30-37 (GANGNGKT) contributes to the ATP binding site.

It belongs to the RecF family.

The protein localises to the cytoplasm. The RecF protein is involved in DNA metabolism; it is required for DNA replication and normal SOS inducibility. RecF binds preferentially to single-stranded, linear DNA. It also seems to bind ATP. The chain is DNA replication and repair protein RecF from Nocardia farcinica (strain IFM 10152).